The sequence spans 440 residues: Syntrophin-1 (440 aa).

PH domains lie at 2 to 208 and 227 to 340; these read AAVR…ACTT and QVRH…IGGY. In terms of domain architecture, PDZ spans 45–128; the sequence is TVRVVKYDGN…VVDLQVQYRR (84 aa). The SU domain occupies 384–440; sequence SFETIRATGDDGGRFLWVDFGPPHGEQELDLLNSAKPVVFILHSFLATKVYRLGLYA.

Belongs to the syntrophin family. As to quaternary structure, component of the dystrophin glycoprotein complex (DGC). Interacts with dyb-1, dys-1 and snf-6 to form the DGC. As to expression, expressed in neurons and muscles; particularly strong expression in the body wall, head and vulval muscles, and in ventral nerve cord (at protein level).

The protein resides in the membrane. Its subcellular location is the cytoplasm. It localises to the cytoskeleton. In terms of biological role, adapter protein that binds to and probably organizes the subcellular localization of a variety of membrane proteins. May link various receptors to the actin cytoskeleton and the dystrophin glycoprotein complex (DGC). May also act by slowing calcium channel activity via a direct or indirect mechanism potentially involving other second messengers. Plays an early role in the formation of the neuromuscular junction and is necessary for muscle maintenance. The polypeptide is Syntrophin-1 (Caenorhabditis elegans).